The chain runs to 491 residues: F-box protein At3g59000 (491 aa).

Residues 1 to 49 (MDRVGSLPDELLSHILSFLTTKEAALTSLLSKRWRYLIAFVPNLAFDDI) form the F-box domain.

Part of a SCF (ASK-cullin-F-box) protein ligase complex. Interacts with ASK4.

It is found in the nucleus. It functions in the pathway protein modification; protein ubiquitination. Functionally, component of SCF(ASK-cullin-F-box) E3 ubiquitin ligase complexes, which may mediate the ubiquitination and subsequent proteasomal degradation of target proteins. This Arabidopsis thaliana (Mouse-ear cress) protein is F-box protein At3g59000.